A 174-amino-acid chain; its full sequence is Nicotinamide-nucleotide adenylyltransferase (174 aa).

Belongs to the archaeal NMN adenylyltransferase family.

The protein localises to the cytoplasm. It carries out the reaction beta-nicotinamide D-ribonucleotide + ATP + H(+) = diphosphate + NAD(+). The protein operates within cofactor biosynthesis; NAD(+) biosynthesis; NAD(+) from nicotinamide D-ribonucleotide: step 1/1. This is Nicotinamide-nucleotide adenylyltransferase from Methanospirillum hungatei JF-1 (strain ATCC 27890 / DSM 864 / NBRC 100397 / JF-1).